A 96-amino-acid chain; its full sequence is Nucleoid-associated protein TC_0612 (96 aa).

This sequence belongs to the YbaB/EbfC family. As to quaternary structure, homodimer.

Its subcellular location is the cytoplasm. The protein localises to the nucleoid. In terms of biological role, binds to DNA and alters its conformation. May be involved in regulation of gene expression, nucleoid organization and DNA protection. The protein is Nucleoid-associated protein TC_0612 of Chlamydia muridarum (strain MoPn / Nigg).